The following is a 201-amino-acid chain: Dephospho-CoA kinase (201 aa).

The region spanning 10-201 is the DPCK domain; the sequence is LIGLTGGIAT…PQIIKAWHHR (192 aa). 18–23 provides a ligand contact to ATP; it reads ATGKST.

Belongs to the CoaE family.

The protein resides in the cytoplasm. It carries out the reaction 3'-dephospho-CoA + ATP = ADP + CoA + H(+). The protein operates within cofactor biosynthesis; coenzyme A biosynthesis; CoA from (R)-pantothenate: step 5/5. Catalyzes the phosphorylation of the 3'-hydroxyl group of dephosphocoenzyme A to form coenzyme A. This chain is Dephospho-CoA kinase, found in Synechocystis sp. (strain ATCC 27184 / PCC 6803 / Kazusa).